A 422-amino-acid polypeptide reads, in one-letter code: F-box/WD repeat-containing protein 2 (422 aa).

Residues 54–101 (RDFLKLLPLELSFYLLKWLDPQTLLTCCLVSKQWNKVISACTEVWQTA) form the F-box domain. WD repeat units follow at residues 146 to 183 (GHSA…CVYG), 185 to 221 (QTHT…RTQH), 224 to 265 (GHTG…NTLT), and 276 to 314 (LQKC…NCKC). At lysine 298 the chain carries N6-acetyllysine.

In terms of assembly, directly interacts with SKP1 and CUL1. As to expression, widely expressed during embryogenesis and in adult tissues.

Substrate-recognition component of the SCF (SKP1-CUL1-F-box protein)-type E3 ubiquitin ligase complex. This is F-box/WD repeat-containing protein 2 (Fbxw2) from Mus musculus (Mouse).